Consider the following 188-residue polypeptide: Elongation factor P (188 aa).

This sequence belongs to the elongation factor P family.

It localises to the cytoplasm. It participates in protein biosynthesis; polypeptide chain elongation. Involved in peptide bond synthesis. Stimulates efficient translation and peptide-bond synthesis on native or reconstituted 70S ribosomes in vitro. Probably functions indirectly by altering the affinity of the ribosome for aminoacyl-tRNA, thus increasing their reactivity as acceptors for peptidyl transferase. This is Elongation factor P from Nitrosospira multiformis (strain ATCC 25196 / NCIMB 11849 / C 71).